Consider the following 297-residue polypeptide: N-acetylmuramic acid 6-phosphate etherase (297 aa).

Residues 55 to 218 (AAAALKSGGR…STGAMVKFGK (164 aa)) enclose the SIS domain. Glutamate 83 acts as the Proton donor in catalysis. Glutamate 114 is a catalytic residue.

This sequence belongs to the GCKR-like family. MurNAc-6-P etherase subfamily. Homodimer.

It carries out the reaction N-acetyl-D-muramate 6-phosphate + H2O = N-acetyl-D-glucosamine 6-phosphate + (R)-lactate. The protein operates within amino-sugar metabolism; 1,6-anhydro-N-acetylmuramate degradation. It functions in the pathway amino-sugar metabolism; N-acetylmuramate degradation. It participates in cell wall biogenesis; peptidoglycan recycling. Functionally, specifically catalyzes the cleavage of the D-lactyl ether substituent of MurNAc 6-phosphate, producing GlcNAc 6-phosphate and D-lactate. Together with AnmK, is also required for the utilization of anhydro-N-acetylmuramic acid (anhMurNAc) either imported from the medium or derived from its own cell wall murein, and thus plays a role in cell wall recycling. This Salmonella agona (strain SL483) protein is N-acetylmuramic acid 6-phosphate etherase.